A 360-amino-acid polypeptide reads, in one-letter code: Phenylalanine--tRNA ligase alpha subunit (360 aa).

Mg(2+) is bound at residue E260.

It belongs to the class-II aminoacyl-tRNA synthetase family. Phe-tRNA synthetase alpha subunit type 1 subfamily. Tetramer of two alpha and two beta subunits. Requires Mg(2+) as cofactor.

It is found in the cytoplasm. The enzyme catalyses tRNA(Phe) + L-phenylalanine + ATP = L-phenylalanyl-tRNA(Phe) + AMP + diphosphate + H(+). The protein is Phenylalanine--tRNA ligase alpha subunit of Rhodopseudomonas palustris (strain ATCC BAA-98 / CGA009).